Consider the following 281-residue polypeptide: Release factor glutamine methyltransferase (281 aa).

The S-adenosyl-L-methionine site is built by Glu-142 and Asn-184. Residue 184-187 participates in substrate binding; sequence NPPY. A disordered region spans residues 261-281; it reads AADHPDLNNRPRFATARKALP.

The protein belongs to the protein N5-glutamine methyltransferase family. PrmC subfamily.

It catalyses the reaction L-glutaminyl-[peptide chain release factor] + S-adenosyl-L-methionine = N(5)-methyl-L-glutaminyl-[peptide chain release factor] + S-adenosyl-L-homocysteine + H(+). In terms of biological role, methylates the class 1 translation termination release factors RF1/PrfA and RF2/PrfB on the glutamine residue of the universally conserved GGQ motif. In Streptomyces coelicolor (strain ATCC BAA-471 / A3(2) / M145), this protein is Release factor glutamine methyltransferase.